A 289-amino-acid chain; its full sequence is Oxygen-dependent coproporphyrinogen-III oxidase (289 aa).

Residue serine 82 coordinates substrate. Histidine 86 and histidine 96 together coordinate a divalent metal cation. The active-site Proton donor is the histidine 96. 98 to 100 (NYR) is a binding site for substrate. The a divalent metal cation site is built by histidine 130 and histidine 160. Positions 224-259 (YVEFNLVWDRGTIFGLQTNGRIESILMSMPPLVRWE) are important for dimerization.

It belongs to the aerobic coproporphyrinogen-III oxidase family. Homodimer. The cofactor is a divalent metal cation.

The protein resides in the cytoplasm. The catalysed reaction is coproporphyrinogen III + O2 + 2 H(+) = protoporphyrinogen IX + 2 CO2 + 2 H2O. The protein operates within porphyrin-containing compound metabolism; protoporphyrin-IX biosynthesis; protoporphyrinogen-IX from coproporphyrinogen-III (O2 route): step 1/1. Its function is as follows. Involved in the heme and chlorophyll biosynthesis. Catalyzes the aerobic oxidative decarboxylation of propionate groups of rings A and B of coproporphyrinogen-III to yield the vinyl groups in protoporphyrinogen-IX. This is Oxygen-dependent coproporphyrinogen-III oxidase from Gloeobacter violaceus (strain ATCC 29082 / PCC 7421).